We begin with the raw amino-acid sequence, 2517 residues long: Non-reducing polyketide synthase pkbA (2517 aa).

Positions 59-250 (LERVAGPAEK…KRFDLRGRFH (192 aa)) are N-terminal acylcarrier protein transacylase domain (SAT). Residues 380–775 (SEPIAIIGMG…SANTVSSLKE (396 aa)) enclose the Ketosynthase family 3 (KS3) domain. Catalysis depends on for beta-ketoacyl synthase activity residues Cys-547, His-682, and His-721. Residues 849 to 1158 (AFGGQVARSV…TGTAALADAT (310 aa)) are malonyl-CoA:ACP transacylase (MAT) domain. The active-site For acyl/malonyl transferase activity is Ser-935. The segment at 1221–1353 (EEFLTFVKYK…GTVVLRENDT (133 aa)) is N-terminal hotdog fold. Positions 1221 to 1530 (EEFLTFVKYK…FTRVQISSLG (310 aa)) constitute a PKS/mFAS DH domain. The tract at residues 1251–1525 (FVKGHAVLAE…ILGAHFTRVQ (275 aa)) is product template (PT) domain. His-1255 acts as the Proton acceptor; for dehydratase activity in catalysis. Positions 1379 to 1530 (DCHILQGPVV…FTRVQISSLG (152 aa)) are C-terminal hotdog fold. The active-site Proton donor; for dehydratase activity is Asp-1437. A Carrier 1 domain is found at 1574 to 1651 (RPTLEISEKL…SISKCLASYL (78 aa)). Ser-1611 is modified (O-(pantetheine 4'-phosphoryl)serine). The disordered stretch occupies residues 1659-1684 (QPEDLADADSVESDSDMPTGAVTSGI). Over residues 1662–1673 (DLADADSVESDS) the composition is skewed to acidic residues. Residues 1685 to 1761 (TTPDDAVSRL…DLIALVPALN (77 aa)) enclose the Carrier 2 domain. The residue at position 1721 (Ser-1721) is an O-(pantetheine 4'-phosphoryl)serine. The methyltransferase (CMeT) domain stretch occupies residues 1976–2075 (LELGGGTGGT…IHRMLRPDGF (100 aa)). The thioesterase (TE) domain stretch occupies residues 2200–2514 (LMIHGGGHIM…RGYDFLKEEV (315 aa)).

Pantetheine 4'-phosphate serves as cofactor.

The enzyme catalyses 3 malonyl-CoA + acetyl-CoA + S-adenosyl-L-methionine + H(+) = 3-methylorsellinate + S-adenosyl-L-homocysteine + 3 CO2 + 4 CoA. It functions in the pathway phytotoxin biosynthesis. In terms of biological role, non-reducing polyketide synthase; part of the gene cluster that mediates the biosynthesis of cichorine, a phytotoxin active against knapweed, corn, and soybeans. The first step in the pathway is performed by the non-reducing polyketide synthase pkbA that condenses one acetyl-CoA starter unit with 3 malonyl-CoA units. PkbA also catalyzes one methylation step to produce 3-methylorsellinate. The nonribosomal peptide synthase-like protein cicB, the cytochrome P450 monooxygenase cicH and the O-methyltransferase cicE are involved in the conversion of 3-methylorsellinate into nidulol. CicB converts 3-methylorsellinate to a yet unidentified intermediate, cicH may play a ring-closing role for cichorine and cicE is plausibly responsible for the methylation of one of the phenol groups. The oxidoreductase cicC acts downstream with still unidentified enzymes to further convert nidulol into cichorin. This is Non-reducing polyketide synthase pkbA from Emericella nidulans (strain FGSC A4 / ATCC 38163 / CBS 112.46 / NRRL 194 / M139) (Aspergillus nidulans).